Reading from the N-terminus, the 297-residue chain is Ubiquinol oxidase 2, mitochondrial (297 aa).

The tract at residues 17–43 (VALNDKQHDKKVENGGAAASGGGDGGD) is disordered. The helical transmembrane segment at 122–142 (AMMLETVAAVPGMVGGMLLHC) threads the bilayer. 3 residues coordinate Fe cation: Glu-126, Glu-165, and His-168. A helical transmembrane segment spans residues 184–204 (ALVFAVQGVFINAYFVTYLLS). Glu-216, Glu-267, and His-270 together coordinate Fe cation.

The protein belongs to the alternative oxidase family. As to quaternary structure, homodimer; disulfide-linked. Requires Fe cation as cofactor.

It localises to the mitochondrion inner membrane. It catalyses the reaction 2 a ubiquinol + O2 = 2 a ubiquinone + 2 H2O. Catalyzes the cyanide-resistant oxidation of ubiquinol and the reduction of molecular oxygen to water, but does not translocate protons and consequently is not linked to oxidative phosphorylation. May increase respiration when the cytochrome respiratory pathway is restricted, or in response to low temperatures. The sequence is that of Ubiquinol oxidase 2, mitochondrial (AOX2) from Nicotiana tabacum (Common tobacco).